A 144-amino-acid polypeptide reads, in one-letter code: Small ribosomal subunit protein bS6 (144 aa).

A disordered region spans residues 92–144 (KVDGHDEGPSVQMQKRDDRGDREERGDRGDRGDRGPRGDRGPREDRGPRPERR). Residues 93 to 144 (VDGHDEGPSVQMQKRDDRGDREERGDRGDRGDRGPRGDRGPREDRGPRPERR) show a composition bias toward basic and acidic residues.

The protein belongs to the bacterial ribosomal protein bS6 family.

In terms of biological role, binds together with bS18 to 16S ribosomal RNA. The sequence is that of Small ribosomal subunit protein bS6 (rpsF) from Rhodobacter capsulatus (strain ATCC BAA-309 / NBRC 16581 / SB1003).